The following is a 2055-amino-acid chain: Citron rho-interacting kinase (2055 aa).

The Protein kinase domain maps to 97–359; the sequence is FEVRSLVGCG…FEGLCCHPFF (263 aa). ATP contacts are provided by residues 103-111 and Lys126; that span reads VGCGHFAEV. Catalysis depends on Asp221, which acts as the Proton acceptor. In terms of domain architecture, AGC-kinase C-terminal spans 360-430; sequence ARTDWNNIRN…SKALGYLGRS (71 aa). A disordered region spans residues 375 to 398; it reads VPTLKSDDDTSNFDEPEKNSWVSS. Coiled coils occupy residues 457 to 747, 773 to 1238, and 1284 to 1318; these read LQDS…AQVS, IKKD…LEYQ, and YNEL…AREE. The interval 1349–1376 is disordered; the sequence is PEHQPSAMSLLAPPSSRRKEASTPEEFS. Over residues 1353 to 1363 the composition is skewed to low complexity; the sequence is PSAMSLLAPPS. Basic and acidic residues predominate over residues 1365 to 1376; sequence RRKEASTPEEFS. The Phorbol-ester/DAG-type zinc finger occupies 1388–1437; the sequence is PHRFNVGLNMRATKCAVCLDTVHFGRQASKCLECQVMCHPKCSTCLPATC. The PH domain occupies 1469–1589; it reads SLHLEGWMKV…WVTALESVVA (121 aa). In terms of domain architecture, CNH spans 1617-1907; sequence RLDMNCTLPF…RYLGPAISSG (291 aa). The tract at residues 1932 to 2040 is disordered; sequence SGTEQHRVPS…RGRLPAGAVR (109 aa). Positions 1939 to 1948 are enriched in polar residues; it reads VPSTSRSSPN. Basic and acidic residues predominate over residues 1974-2031; that stretch reads SHPREPSTPHRYRDREGRTELRRDKSPGRPLEREKSPGRMLSTRRERSPGRLFEDSSR.

The protein belongs to the protein kinase superfamily. AGC Ser/Thr protein kinase family. Homodimer. Directly interacts with KIF14 depending on the activation state (stronger interaction with the kinase-dead form). Interacts with TTC3.

Its subcellular location is the cytoplasm. It carries out the reaction L-seryl-[protein] + ATP = O-phospho-L-seryl-[protein] + ADP + H(+). The catalysed reaction is L-threonyl-[protein] + ATP = O-phospho-L-threonyl-[protein] + ADP + H(+). In terms of biological role, plays a role in cytokinesis. Required for KIF14 localization to the central spindle and midbody. Putative RHO/RAC effector that binds to the GTP-bound forms of RHO and RAC1. It probably binds p21 with a tighter specificity in vivo. Displays serine/threonine protein kinase activity. Plays an important role in the regulation of cytokinesis and the development of the central nervous system. Phosphorylates MYL9/MLC2. The protein is Citron rho-interacting kinase of Rattus norvegicus (Rat).